The sequence spans 165 residues: Cytochrome c-type biogenesis protein CcmE (165 aa).

The Cytoplasmic segment spans residues 1–7 (MTRKQKR). Residues 8 to 28 (LAIIGGGMSFIVAAVLLVMFA) traverse the membrane as a helical; Signal-anchor for type II membrane protein segment. Topologically, residues 29–165 (FGQSIAYFYM…ASGDKTGATK (137 aa)) are periplasmic. Residues His-123 and Tyr-127 each contribute to the heme site. The segment at 138-165 (DKGLWQQGAEGAAPAASAASGDKTGATK) is disordered. A compositionally biased stretch (low complexity) spans 145 to 158 (GAEGAAPAASAASG).

It belongs to the CcmE/CycJ family.

It localises to the cell inner membrane. In terms of biological role, heme chaperone required for the biogenesis of c-type cytochromes. Transiently binds heme delivered by CcmC and transfers the heme to apo-cytochromes in a process facilitated by CcmF and CcmH. This is Cytochrome c-type biogenesis protein CcmE from Agrobacterium fabrum (strain C58 / ATCC 33970) (Agrobacterium tumefaciens (strain C58)).